The following is a 91-amino-acid chain: Protein sigN139 (91 aa).

N-linked (GlcNAc...) asparagine glycans are attached at residues Asn23 and Asn34. Residues 46 to 68 (LLPVVAFISGTVTSITGLVAGAL) traverse the membrane as a helical segment.

The protein resides in the membrane. In Dictyostelium discoideum (Social amoeba), this protein is Protein sigN139.